The following is an 872-amino-acid chain: MSSALQTPMMRQYLEIKAQHPESILFFRMGDFYEMFLDDALVASRILDITLTSRNKNSADEIPFCGVPFHSAQPYIARLVEAGYRVAVCEQIEDPKQTKGLVKRDVVKVVTPALVTESESLTPDENSFLLALCSSGQRWGCAWLDLSTGEFLTANSDNLAGAATLLASIAPRELLLPDQLRRDLPPELALVAGDRPRAAVADWVLDKDYCSKLICSQFGVASPEMLGLAVTELSEALLATGMVLHYLQENRHATLPHLRDLTIVRQNDHLALDPATRRNLELTATMTDNKKSGSLLGCLDRTATAMGARTLKQWLSYPLVQVAPIRRRLEAVEELKENPALQDQLREQLKGVHDLERLNGRVSMAGAGGRDLRSLHDSLEQVPQIRLALTEATAPLLRDLTEELDPLQDIRSLINQAIAPAPPFSLREGGIIADGYHAELDELRAISREGKGYIARMEAQERDRTGISSLKIRYNKVFGYYIEVTKSNLSSVPDNYIRRQTIATGERYITEELKSYEEKVLGAEDRICELEYTLFQEVRERTAAQGGRVSRTASALASLDVLASLALVAQERDYCKPVVDDGDTLEIIEGRHPVVEAMNLGERFVPNDTRLDQEQHQLLMITGPNMAGKSTYMRQVALITLMAQVGSFVPASRATIGIADQIFTRVGAGDNLARGQSTFMVEMMETAHILRSATTKSLVVLDEIGRGTSTFDGLSIAWAVAEYLHDTNHCKARTLFATHYHELADLAATREGITNLTVAVKEWNDQVIFLRTIIPGAASHSYGIQVARLAGMPRNVIERAKEVLKTLEEGEFEQGSPRLSKSSIAPPRKETAQFTLFEQQGDLLRERLKKLNISVMTPLEALNLLDELKKMA.

623-630 (GPNMAGKS) serves as a coordination point for ATP.

The protein belongs to the DNA mismatch repair MutS family.

In terms of biological role, this protein is involved in the repair of mismatches in DNA. It is possible that it carries out the mismatch recognition step. This protein has a weak ATPase activity. This is DNA mismatch repair protein MutS from Trichlorobacter lovleyi (strain ATCC BAA-1151 / DSM 17278 / SZ) (Geobacter lovleyi).